A 107-amino-acid chain; its full sequence is Large ribosomal subunit protein eL33B (107 aa).

A2 carries the N-acetylalanine; partial modification. K47 is covalently cross-linked (Glycyl lysine isopeptide (Lys-Gly) (interchain with G-Cter in ubiquitin)).

It belongs to the eukaryotic ribosomal protein eL33 family. In terms of assembly, component of the large ribosomal subunit (LSU). Mature yeast ribosomes consist of a small (40S) and a large (60S) subunit. The 40S small subunit contains 1 molecule of ribosomal RNA (18S rRNA) and 33 different proteins (encoded by 57 genes). The large 60S subunit contains 3 rRNA molecules (25S, 5.8S and 5S rRNA) and 46 different proteins (encoded by 81 genes). In terms of processing, N-terminally acetylated by acetyltransferase NatA.

The protein localises to the cytoplasm. In terms of biological role, component of the ribosome, a large ribonucleoprotein complex responsible for the synthesis of proteins in the cell. The small ribosomal subunit (SSU) binds messenger RNAs (mRNAs) and translates the encoded message by selecting cognate aminoacyl-transfer RNA (tRNA) molecules. The large subunit (LSU) contains the ribosomal catalytic site termed the peptidyl transferase center (PTC), which catalyzes the formation of peptide bonds, thereby polymerizing the amino acids delivered by tRNAs into a polypeptide chain. The nascent polypeptides leave the ribosome through a tunnel in the LSU and interact with protein factors that function in enzymatic processing, targeting, and the membrane insertion of nascent chains at the exit of the ribosomal tunnel. This chain is Large ribosomal subunit protein eL33B, found in Saccharomyces cerevisiae (strain ATCC 204508 / S288c) (Baker's yeast).